Consider the following 94-residue polypeptide: Co-chaperonin GroES (94 aa).

Belongs to the GroES chaperonin family. As to quaternary structure, heptamer of 7 subunits arranged in a ring. Interacts with the chaperonin GroEL.

The protein resides in the cytoplasm. In terms of biological role, together with the chaperonin GroEL, plays an essential role in assisting protein folding. The GroEL-GroES system forms a nano-cage that allows encapsulation of the non-native substrate proteins and provides a physical environment optimized to promote and accelerate protein folding. GroES binds to the apical surface of the GroEL ring, thereby capping the opening of the GroEL channel. The polypeptide is Co-chaperonin GroES (Finegoldia magna (strain ATCC 29328 / DSM 20472 / WAL 2508) (Peptostreptococcus magnus)).